A 526-amino-acid chain; its full sequence is ATP synthase subunit alpha (526 aa).

171 to 178 provides a ligand contact to ATP; that stretch reads GDRQTGKT.

The protein belongs to the ATPase alpha/beta chains family. As to quaternary structure, F-type ATPases have 2 components, CF(1) - the catalytic core - and CF(0) - the membrane proton channel. CF(1) has five subunits: alpha(3), beta(3), gamma(1), delta(1), epsilon(1). CF(0) has four main subunits: a(1), b(1), b'(1) and c(9-12).

The protein resides in the cell inner membrane. The catalysed reaction is ATP + H2O + 4 H(+)(in) = ADP + phosphate + 5 H(+)(out). Produces ATP from ADP in the presence of a proton gradient across the membrane. The alpha chain is a regulatory subunit. In Chlorobaculum tepidum (strain ATCC 49652 / DSM 12025 / NBRC 103806 / TLS) (Chlorobium tepidum), this protein is ATP synthase subunit alpha.